Reading from the N-terminus, the 353-residue chain is RNA 3'-terminal phosphate cyclase (353 aa).

ATP contacts are provided by residues Q100 and 285 to 289; that span reads HAADQ. H311 serves as the catalytic Tele-AMP-histidine intermediate.

The protein belongs to the RNA 3'-terminal cyclase family. Type 1 subfamily.

The protein resides in the cytoplasm. It carries out the reaction a 3'-end 3'-phospho-ribonucleotide-RNA + ATP = a 3'-end 2',3'-cyclophospho-ribonucleotide-RNA + AMP + diphosphate. Functionally, catalyzes the conversion of 3'-phosphate to a 2',3'-cyclic phosphodiester at the end of RNA. The mechanism of action of the enzyme occurs in 3 steps: (A) adenylation of the enzyme by ATP; (B) transfer of adenylate to an RNA-N3'P to produce RNA-N3'PP5'A; (C) and attack of the adjacent 2'-hydroxyl on the 3'-phosphorus in the diester linkage to produce the cyclic end product. The biological role of this enzyme is unknown but it is likely to function in some aspects of cellular RNA processing. In Nitrosospira multiformis (strain ATCC 25196 / NCIMB 11849 / C 71), this protein is RNA 3'-terminal phosphate cyclase.